The sequence spans 450 residues: tRNA modification GTPase MnmE (450 aa).

(6S)-5-formyl-5,6,7,8-tetrahydrofolate-binding residues include Arg-21, Glu-80, and Lys-119. The 161-residue stretch at 213 to 373 folds into the TrmE-type G domain; sequence GIKVVIIGKP…LEEEIIKSVK (161 aa). Residue Asn-223 participates in K(+) binding. Residues 223 to 228, 242 to 248, and 267 to 270 contribute to the GTP site; these read NVGKST, TDIPGTT, and DTAG. Ser-227 lines the Mg(2+) pocket. Positions 242, 244, and 247 each coordinate K(+). Residue Thr-248 coordinates Mg(2+). Residue Lys-450 coordinates (6S)-5-formyl-5,6,7,8-tetrahydrofolate.

Belongs to the TRAFAC class TrmE-Era-EngA-EngB-Septin-like GTPase superfamily. TrmE GTPase family. In terms of assembly, homodimer. Heterotetramer of two MnmE and two MnmG subunits. K(+) serves as cofactor.

It localises to the cytoplasm. Its function is as follows. Exhibits a very high intrinsic GTPase hydrolysis rate. Involved in the addition of a carboxymethylaminomethyl (cmnm) group at the wobble position (U34) of certain tRNAs, forming tRNA-cmnm(5)s(2)U34. This Pseudothermotoga lettingae (strain ATCC BAA-301 / DSM 14385 / NBRC 107922 / TMO) (Thermotoga lettingae) protein is tRNA modification GTPase MnmE.